The primary structure comprises 212 residues: Ribosomal RNA large subunit methyltransferase E (212 aa).

A compositionally biased stretch (basic residues) spans M1 to G10. Residues M1–P24 form a disordered region. G66, W68, D86, D102, and D127 together coordinate S-adenosyl-L-methionine. Residue K167 is the Proton acceptor of the active site.

This sequence belongs to the class I-like SAM-binding methyltransferase superfamily. RNA methyltransferase RlmE family.

The protein localises to the cytoplasm. It carries out the reaction uridine(2552) in 23S rRNA + S-adenosyl-L-methionine = 2'-O-methyluridine(2552) in 23S rRNA + S-adenosyl-L-homocysteine + H(+). Its function is as follows. Specifically methylates the uridine in position 2552 of 23S rRNA at the 2'-O position of the ribose in the fully assembled 50S ribosomal subunit. The sequence is that of Ribosomal RNA large subunit methyltransferase E from Halorhodospira halophila (strain DSM 244 / SL1) (Ectothiorhodospira halophila (strain DSM 244 / SL1)).